A 453-amino-acid polypeptide reads, in one-letter code: Phosphoglucosamine mutase (453 aa).

S110 serves as the catalytic Phosphoserine intermediate. Mg(2+) contacts are provided by S110, D247, D249, and D251. S110 is subject to Phosphoserine.

This sequence belongs to the phosphohexose mutase family. It depends on Mg(2+) as a cofactor. In terms of processing, activated by phosphorylation.

It catalyses the reaction alpha-D-glucosamine 1-phosphate = D-glucosamine 6-phosphate. In terms of biological role, catalyzes the conversion of glucosamine-6-phosphate to glucosamine-1-phosphate. The chain is Phosphoglucosamine mutase from Tropheryma whipplei (strain TW08/27) (Whipple's bacillus).